The chain runs to 358 residues: Peptide chain release factor 1 (358 aa).

Gln233 carries the post-translational modification N5-methylglutamine.

The protein belongs to the prokaryotic/mitochondrial release factor family. Post-translationally, methylated by PrmC. Methylation increases the termination efficiency of RF1.

The protein localises to the cytoplasm. In terms of biological role, peptide chain release factor 1 directs the termination of translation in response to the peptide chain termination codons UAG and UAA. The protein is Peptide chain release factor 1 of Geobacillus kaustophilus (strain HTA426).